The chain runs to 195 residues: Killer cell lectin-like receptor subfamily G member 1 (195 aa).

The Cytoplasmic portion of the chain corresponds to 1–38 (MTDSVIYSMLELPTATQAQNDYGPQQKSSSSRPSCSCL). An ITIM motif motif is present at residues 5 to 10 (VIYSML). The helical; Signal-anchor for type II membrane protein transmembrane segment at 39–59 (VAIALGLLTAVLLSVLLYQWI) threads the bilayer. Over 60–195 (LCQGSNYSTC…KCPFADQALF (136 aa)) the chain is Extracellular. N65 carries N-linked (GlcNAc...) asparagine glycosylation. A disulfide bridge connects residues C75 and C86. The C-type lectin domain maps to 82 to 185 (YGNHCYYFSV…CEVPLHWVCK (104 aa)). N97, N137, and N150 each carry an N-linked (GlcNAc...) asparagine glycan. 2 disulfides stabilise this stretch: C103-C184 and C163-C176.

In terms of assembly, forms a monomer and homodimer; disulfide-linked. Interacts (via ITIM motif) with PTPN11 and INPP5D. In terms of tissue distribution, expressed specifically on natural killer (NK) cells and T-cells, mainly CD8 T-cells.

The protein resides in the cell membrane. Its function is as follows. Plays an inhibitory role on natural killer (NK) cells and T-cell functions upon binding to their non-MHC ligands. May mediate missing self recognition by binding to a highly conserved site on classical cadherins, enabling it to monitor expression of E-cadherin/CDH1, N-cadherin/CDH2 and R-cadherin/CDH4 on target cells. This chain is Killer cell lectin-like receptor subfamily G member 1 (KLRG1), found in Homo sapiens (Human).